The chain runs to 1134 residues: Ovochymase-1 (1134 aa).

A signal peptide spans 1–22; sequence MGLLASAGLLLLLVIGHPRSLG. The propeptide at 23–46 is activation peptide; it reads LKCGIRMVNMKSKEPAVGSRFFSR. In terms of domain architecture, Peptidase S1 1 spans 38-296; that stretch reads AVGSRFFSRI…LMDFITQNLF (259 aa). The N-linked (GlcNAc...) asparagine glycan is linked to Asn52. Residues Cys72 and Cys88 are joined by a disulfide bond. Catalysis depends on His87, which acts as the Charge relay system. The N-linked (GlcNAc...) asparagine glycan is linked to Asn99. Glu116 lines the Ca(2+) pocket. The active-site Charge relay system is Asp139. Cystine bridges form between Cys173-Cys243, Cys204-Cys222, and Cys233-Cys262. Ser237 serves as the catalytic Charge relay system. CUB domains are found at residues 284–410 and 419–531; these read VSEL…VTAV and CGSL…FTIL. Asn324 is a glycosylation site (N-linked (GlcNAc...) asparagine). Cystine bridges form between Cys341–Cys373, Cys419–Cys446, and Cys473–Cys494. N-linked (GlcNAc...) asparagine glycosylation is present at Asn431. Asn507 is a glycosylation site (N-linked (GlcNAc...) asparagine). Residues 575 to 812 form the Peptidase S1 2 domain; that stretch reads IAGGEEACPH…FLDWIQSKIN (238 aa). A disulfide bridge connects residues Cys600 and Cys616. Active-site charge relay system residues include His615 and Asp664. Disulfide bonds link Cys698–Cys769, Cys729–Cys747, Cys759–Cys788, and Cys846–Cys873. The active-site Charge relay system is the Ser763. The region spanning 846–957 is the CUB 3 domain; it reads CSEAELEKPR…GAFGISYIVL (112 aa). N-linked (GlcNAc...) asparagine glycosylation is present at Asn1106.

This sequence belongs to the peptidase S1 family.

It is found in the secreted. The sequence is that of Ovochymase-1 (OVCH1) from Homo sapiens (Human).